The sequence spans 341 residues: Nicotinate-nucleotide--dimethylbenzimidazole phosphoribosyltransferase (341 aa).

The active-site Proton acceptor is the glutamate 306.

This sequence belongs to the CobT family.

It carries out the reaction 5,6-dimethylbenzimidazole + nicotinate beta-D-ribonucleotide = alpha-ribazole 5'-phosphate + nicotinate + H(+). It functions in the pathway nucleoside biosynthesis; alpha-ribazole biosynthesis; alpha-ribazole from 5,6-dimethylbenzimidazole: step 1/2. Functionally, catalyzes the synthesis of alpha-ribazole-5'-phosphate from nicotinate mononucleotide (NAMN) and 5,6-dimethylbenzimidazole (DMB). This chain is Nicotinate-nucleotide--dimethylbenzimidazole phosphoribosyltransferase, found in Methylocella silvestris (strain DSM 15510 / CIP 108128 / LMG 27833 / NCIMB 13906 / BL2).